The sequence spans 820 residues: Cation/H(+) antiporter 17 (820 aa).

The next 12 membrane-spanning stretches (helical) occupy residues 30–50 (LPLL…LAFL), 58–75 (RVIA…SALG), 90–110 (LTVL…LVGL), 124–144 (ALSI…GTSF), 159–179 (FLVF…ARIL), 192–212 (IALS…ALAV), 222–242 (LTSL…IFVV), 276–296 (FVTD…GVIF), 313–333 (LVSG…TNVA), 342–362 (GLLV…TVLV), 374–394 (LALG…LNIG), and 404–424 (IFAI…PLVL). Residues Ser817 and Ser819 each carry the phosphoserine modification.

It belongs to the monovalent cation:proton antiporter 2 (CPA2) transporter (TC 2.A.37) family. CHX (TC 2.A.37.4) subfamily. In terms of tissue distribution, predominantly expressed in epidermal and cortical cells of mature roots but also barely detected in leaves.

The protein localises to the membrane. Its function is as follows. Operates as a K(+)/H(+) antiporter that controls K(+) acquisition and homeostasis. This chain is Cation/H(+) antiporter 17 (CHX17), found in Arabidopsis thaliana (Mouse-ear cress).